A 707-amino-acid chain; its full sequence is Glucose starvation modulator protein 1 (707 aa).

A DNA-binding region (zn(2)-C6 fungal-type) is located at residues 20–48 (CTFCHQKHLQCSNERPCKNCVKRNIADQC). Disordered stretches follow at residues 63–122 (NSKA…PNDL), 154–188 (QPTH…PPES), 260–283 (DQQQ…GPSH), and 385–404 (NVSS…SAIA). 2 stretches are compositionally biased toward low complexity: residues 66 to 79 (AVAA…TTTT) and 91 to 104 (SPSI…ISPI). Polar residues-rich tracts occupy residues 105 to 114 (NTSTFDTNGH) and 154 to 172 (QPTH…QVQP). Over residues 178–188 (SSVPPSAPPES) the composition is skewed to low complexity. Polar residues predominate over residues 260–274 (DQQQSSSEATGTSAS). In terms of domain architecture, PAS spans 522-591 (DYEKLSQLNS…FQLFKSVAVG (70 aa)). The segment covering 621–652 (NYNNNYNHNYSHNNNNNNNSNNSNNNGMSTGA) has biased composition (low complexity). The segment at 621–659 (NYNNNYNHNYSHNNNNNNNSNNSNNNGMSTGAGNSGDGD) is disordered.

Belongs to the ERT1/acuK family.

Its subcellular location is the nucleus. Its function is as follows. Transcription factor which regulates nonfermentable carbon utilization. The protein is Glucose starvation modulator protein 1 (GSM1) of Lodderomyces elongisporus (strain ATCC 11503 / CBS 2605 / JCM 1781 / NBRC 1676 / NRRL YB-4239) (Yeast).